We begin with the raw amino-acid sequence, 488 residues long: Probable glycine dehydrogenase (decarboxylating) subunit 2 (488 aa).

An N6-(pyridoxal phosphate)lysine modification is found at Lys-264.

The protein belongs to the GcvP family. C-terminal subunit subfamily. In terms of assembly, the glycine cleavage system is composed of four proteins: P, T, L and H. In this organism, the P 'protein' is a heterodimer of two subunits. Pyridoxal 5'-phosphate is required as a cofactor.

It catalyses the reaction N(6)-[(R)-lipoyl]-L-lysyl-[glycine-cleavage complex H protein] + glycine + H(+) = N(6)-[(R)-S(8)-aminomethyldihydrolipoyl]-L-lysyl-[glycine-cleavage complex H protein] + CO2. Functionally, the glycine cleavage system catalyzes the degradation of glycine. The P protein binds the alpha-amino group of glycine through its pyridoxal phosphate cofactor; CO(2) is released and the remaining methylamine moiety is then transferred to the lipoamide cofactor of the H protein. The protein is Probable glycine dehydrogenase (decarboxylating) subunit 2 of Methylococcus capsulatus (strain ATCC 33009 / NCIMB 11132 / Bath).